Reading from the N-terminus, the 1042-residue chain is Kinesin-like protein KIN-5A (1042 aa).

Positions M1–S14 are enriched in low complexity. A disordered region spans residues M1–K45. The span at S21–V31 shows a compositional bias: basic and acidic residues. Over residues D32–S41 the composition is skewed to polar residues. In terms of domain architecture, Kinesin motor spans N50–I392. G136 to T143 lines the ATP pocket. Residues T480–E517 adopt a coiled-coil conformation. The segment at K1021–N1042 is disordered.

The protein belongs to the TRAFAC class myosin-kinesin ATPase superfamily. Kinesin family. KIN-5/BimC subfamily.

The protein resides in the cytoplasm. It localises to the cytoskeleton. Its subcellular location is the spindle. Its function is as follows. Responsible for microtubule translocation. May be important for the organization of phragmoplast-specific arrays of microtubules. Plays an essential role in stabilizing the mitotic spindle. Required during mitotic cytokinesis. This chain is Kinesin-like protein KIN-5A, found in Arabidopsis thaliana (Mouse-ear cress).